Consider the following 124-residue polypeptide: UPF0357 protein C1687.07 (124 aa).

An N-terminal signal peptide occupies residues 1–24; sequence MASFHIIVSYVTVVLAIIIAITFA.

This sequence belongs to the UPF0357 family.

In Schizosaccharomyces pombe (strain 972 / ATCC 24843) (Fission yeast), this protein is UPF0357 protein C1687.07.